The chain runs to 789 residues: Disintegrin and metalloproteinase domain-containing protein 7 (789 aa).

Positions 1 to 23 (MLTTGIFWMTVLISHIQERGIVG) are cleaved as a signal peptide. Positions 24-176 (VEGQELVHPK…NHSCVGLNFT (153 aa)) are excised as a propeptide. The Extracellular segment spans residues 24 to 667 (VEGQELVHPK…EWGEALNLTS (644 aa)). 3 N-linked (GlcNAc...) asparagine glycosylation sites follow: asparagine 84, asparagine 167, and asparagine 174. The region spanning 199-393 (KFIELFVVAD…QKPACILNNP (195 aa)) is the Peptidase M12B domain. 4 cysteine pairs are disulfide-bonded: cysteine 310–cysteine 388, cysteine 350–cysteine 372, cysteine 352–cysteine 357, and cysteine 459–cysteine 479. Residues 401–487 (YPFCGNKKVD…ECPKDEFQAN (87 aa)) enclose the Disintegrin domain. 3 N-linked (GlcNAc...) asparagine glycosylation sites follow: asparagine 583, asparagine 628, and asparagine 664. The helical transmembrane segment at 668 to 689 (VSIMVIVLVMVIIGVGLVILLI) threads the bilayer. The Cytoplasmic segment spans residues 690–789 (RYQKCIKMKQ…DTQSGCERLG (100 aa)). Residues 764–789 (RGIADPKQTDNVNLNLDTQSGCERLG) are disordered. Over residues 772–789 (TDNVNLNLDTQSGCERLG) the composition is skewed to polar residues.

Interacts with ITM2B in sperm; the interaction increases following capacitation. Interacts with HSPA5 and CANX. In terms of tissue distribution, expressed in both the head and tails of sperm (at protein level). Expressed in the epididymis (at protein level). Abundantly expressed in the apical region of the proximal caput epididymal epithelium, with decreasing expression in the mid and distal caput epididymal epithelium.

It is found in the membrane. Required for normal male fertility via maintenance of epithelial cell morphology in the caput epididymis and subsequently correct epididymis lumen structure required for sperm development. Plays a role in sperm motility, flagella morphology and tyrosine phosphorylation during sperm capacitance. Plays a role in normal expression levels of HSPA5, ITM2B and ADAM2 in sperm both prior to and post-capacitation. This is a non catalytic metalloprotease-like protein. In Mus musculus (Mouse), this protein is Disintegrin and metalloproteinase domain-containing protein 7.